Reading from the N-terminus, the 192-residue chain is MEYRSLTLDDFLSRFQLLRPQINRETLNHRQAAVLIPIVRRPQPGLLLTQRSIHLRKHAGQVAFPGGAVDDTDASVIAAALREAEEEVAIPPSAVEVIGVLPPVDSVTGYQVTPVIGIIPPDLPYRASEDEVSAVFEMPLAQALHLGRYHPLDIYRRGDSHRVWLSWYEQYFVWGMTAGIIRELALQIGVKP.

The 132-residue stretch at 29 to 160 (HRQAAVLIPI…PLDIYRRGDS (132 aa)) folds into the Nudix hydrolase domain. The short motif at 67 to 89 (GAVDDTDASVIAAALREAEEEVA) is the Nudix box element. The Mg(2+) site is built by E83 and E87.

This sequence belongs to the Nudix hydrolase family. PCD1 subfamily. Mn(2+) is required as a cofactor. The cofactor is Mg(2+).

Probably mediates the hydrolysis of some nucleoside diphosphate derivatives. This is an uncharacterized protein from Shigella boydii serotype 4 (strain Sb227).